Consider the following 326-residue polypeptide: Probable GTP 3',8-cyclase (326 aa).

The region spanning 6 to 235 is the Radical SAM core domain; that stretch reads LYGRPVLSLR…NRPRYIIRTQ (230 aa). Arg-15 lines the GTP pocket. Residues Cys-22, Cys-26, and Cys-29 each contribute to the [4Fe-4S] cluster site. Residue Lys-62 participates in GTP binding. Position 66 (Gly-66) interacts with S-adenosyl-L-methionine. Thr-92 is a binding site for GTP. Ser-116 is an S-adenosyl-L-methionine binding site. Lys-153 contacts GTP. Positions 253 and 256 each coordinate [4Fe-4S] cluster. GTP is bound at residue 258-260; the sequence is RLR. Cys-270 lines the [4Fe-4S] cluster pocket.

It belongs to the radical SAM superfamily. MoaA family. Requires [4Fe-4S] cluster as cofactor.

The enzyme catalyses GTP + AH2 + S-adenosyl-L-methionine = (8S)-3',8-cyclo-7,8-dihydroguanosine 5'-triphosphate + 5'-deoxyadenosine + L-methionine + A + H(+). It participates in cofactor biosynthesis; molybdopterin biosynthesis. Functionally, catalyzes the cyclization of GTP to (8S)-3',8-cyclo-7,8-dihydroguanosine 5'-triphosphate. The sequence is that of Probable GTP 3',8-cyclase from Thermoplasma volcanium (strain ATCC 51530 / DSM 4299 / JCM 9571 / NBRC 15438 / GSS1).